The sequence spans 367 residues: Leucine-rich repeat-containing protein 28 (367 aa).

9 LRR repeats span residues 16 to 36 (KHKN…ELLK), 42 to 63 (HLER…LAQK), 66 to 87 (NLVE…IGSL), 89 to 111 (KLQC…GGLR), 112 to 133 (ALRH…VGDL), 135 to 156 (ELQT…LHLC), 158 to 180 (SLQY…CQLP), 181 to 202 (SLNE…LGRS), and 204 to 226 (ELQY…LYNK).

In Mus musculus (Mouse), this protein is Leucine-rich repeat-containing protein 28 (Lrrc28).